The sequence spans 241 residues: Ribonuclease P protein component 3 (241 aa).

Belongs to the eukaryotic/archaeal RNase P protein component 3 family. In terms of assembly, consists of a catalytic RNA component and at least 4-5 protein subunits.

It is found in the cytoplasm. It carries out the reaction Endonucleolytic cleavage of RNA, removing 5'-extranucleotides from tRNA precursor.. In terms of biological role, part of ribonuclease P, a protein complex that generates mature tRNA molecules by cleaving their 5'-ends. The protein is Ribonuclease P protein component 3 of Methanococcoides burtonii (strain DSM 6242 / NBRC 107633 / OCM 468 / ACE-M).